A 165-amino-acid polypeptide reads, in one-letter code: Selenoprotein F (165 aa).

A signal peptide spans 1–31; sequence MVAMAAGPSGCLVPAFGLRLLLATVLQAVSA. Selenocysteine 96 is a non-standard amino acid (selenocysteine).

As to quaternary structure, forms a tight complex with UGGT1/UGCGL1. Interacts with UGGT2/UGCGL2. Interacts with RDH11. In terms of processing, the N-terminus is blocked. As to expression, higher levels in prostate and thyroid gland.

It localises to the endoplasmic reticulum lumen. In terms of biological role, may be involved in redox reactions associated with the formation of disulfide bonds. May contribute to the quality control of protein folding in the endoplasmic reticulum. May regulate protein folding by enhancing the catalytic activity of UGGT1/UGCGL1 and UGGT2/UGCGL2. This chain is Selenoprotein F, found in Homo sapiens (Human).